A 322-amino-acid chain; its full sequence is Deoxyhypusine hydroxylase (322 aa).

HEAT-like PBS-type repeat units follow at residues 76-102, 109-135, 234-260, and 267-293; these read LKHE…VMLD, VRHE…SRRE, FKHE…VLKR, and VRHE…HLQD. Residues His-78, Glu-79, His-111, Glu-112, His-236, Glu-237, His-269, and Glu-270 each contribute to the Fe cation site.

It belongs to the deoxyhypusine hydroxylase family. Fe(2+) serves as cofactor.

Its subcellular location is the cytoplasm. The protein resides in the nucleus. It catalyses the reaction [eIF5A protein]-deoxyhypusine + AH2 + O2 = [eIF5A protein]-hypusine + A + H2O. Its pathway is protein modification; eIF5A hypusination. Catalyzes the hydroxylation of the N(6)-(4-aminobutyl)-L-lysine intermediate to form hypusine, an essential post-translational modification only found in mature eIF-5A factor. The polypeptide is Deoxyhypusine hydroxylase (Eremothecium gossypii (strain ATCC 10895 / CBS 109.51 / FGSC 9923 / NRRL Y-1056) (Yeast)).